Consider the following 349-residue polypeptide: Terpene synthase 2 (349 aa).

The DDxx(x)D/E motif signature appears at 84-89 (DDLFDG). The NDxxSxxxD/E motif signature appears at 229 to 237 (NDCVSYEKE).

The protein belongs to the terpene synthase family.

The catalysed reaction is (2E,6E)-farnesyl diphosphate = (3S)-(+)-asterisca-2(9),6-diene + diphosphate. It carries out the reaction (2E)-geranyl diphosphate = (Z)-beta-ocimene + diphosphate. The enzyme catalyses (2E)-geranyl diphosphate + H2O = linalool + diphosphate. In terms of biological role, terpene synthase that converts its substrate farnesyl diphosphate (FPP) into the sesquiterpene (3S)-(+)-asterisca-2(9),6-diene. Is also able to convert geranyl diphosphate (GPP) into a mixture of monoterpenes including (Z)-beta-ocimene, allo-ocimene and linalool. In Dictyostelium discoideum (Social amoeba), this protein is Terpene synthase 2.